The primary structure comprises 298 residues: Acetylglutamate kinase (298 aa).

Substrate is bound by residues 69–70 (GG), Arg-91, and Asn-191.

It belongs to the acetylglutamate kinase family. ArgB subfamily.

It localises to the cytoplasm. It carries out the reaction N-acetyl-L-glutamate + ATP = N-acetyl-L-glutamyl 5-phosphate + ADP. Its pathway is amino-acid biosynthesis; L-arginine biosynthesis; N(2)-acetyl-L-ornithine from L-glutamate: step 2/4. In terms of biological role, catalyzes the ATP-dependent phosphorylation of N-acetyl-L-glutamate. In Neisseria meningitidis serogroup A / serotype 4A (strain DSM 15465 / Z2491), this protein is Acetylglutamate kinase.